We begin with the raw amino-acid sequence, 334 residues long: Mitochondrial ribosome-associated GTPase 1 (334 aa).

The region spanning 36–209 is the CP-type G domain; it reads AKGLKKMQSS…LLDTPGVLAP (174 aa). Residues 83-86, 153-158, and glycine 205 each bind GTP; these read NKMD and NVGKSS.

The protein belongs to the TRAFAC class YlqF/YawG GTPase family. MTG1 subfamily. As to quaternary structure, associates with the mitochondrial ribosome large subunit; the association occurs in a GTP-dependent manner.

It localises to the mitochondrion inner membrane. Functionally, plays a role in the regulation of the mitochondrial ribosome assembly and of translational activity. Displays mitochondrial GTPase activity. The polypeptide is Mitochondrial ribosome-associated GTPase 1 (MTG1) (Homo sapiens (Human)).